Here is a 476-residue protein sequence, read N- to C-terminus: MQVSEILNSGLKREIKITVPAEDMEARLMARLEDAKNKVRLKGFRPGKVPLQHLRRMYGKSFMAEVVNEILNDSSRTIISDRGEKPAMQPEISMTEDEKEAEKVLAGAADFEFSLSYEVIPPIEIKDLAGIKITRPVYDVPDEEVDEQVKRVADSVRTYEAKKGKAEKGDKVTLDYVGKLDGEPFDGGSANDSEVVIGHGQFIPGFEDELIGLKAGDTKTFKITFPETYGAQHLAGKEAEFDVTVKEVAAAEELVIDDELAKKLGLESAEKLREIIRSQLENQYGQMTRQKAKRQLLDALDESYKFEAPSKLVEAEFNNIWSQVTRDLESAGRTFEDEETTEDDARQEYQRLAERRVRLGLVLAQIGEEASIQVSDDEMQRALIETIRRYPAQQQQEIYDFYRQNPQALASVRAPLFEEKVVDQLLSQVDVTDQKVSRDELLAEDEAEGEEKKAAGETKKKAAPKKKAAKKESAAE.

One can recognise a PPIase FKBP-type domain in the interval 169-254; that stretch reads GDKVTLDYVG…VKEVAAAEEL (86 aa). The segment at 437 to 476 is disordered; that stretch reads SRDELLAEDEAEGEEKKAAGETKKKAAPKKKAAKKESAAE. The segment covering 450-460 has biased composition (basic and acidic residues); it reads EEKKAAGETKK.

This sequence belongs to the FKBP-type PPIase family. Tig subfamily.

The protein resides in the cytoplasm. It catalyses the reaction [protein]-peptidylproline (omega=180) = [protein]-peptidylproline (omega=0). In terms of biological role, involved in protein export. Acts as a chaperone by maintaining the newly synthesized protein in an open conformation. Functions as a peptidyl-prolyl cis-trans isomerase. This Chelativorans sp. (strain BNC1) protein is Trigger factor.